The following is a 168-amino-acid chain: RNA pyrophosphohydrolase (168 aa).

Positions Pro8 to Lys160 constitute a Nudix hydrolase domain. Positions Gly47–Ser68 match the Nudix box motif.

The protein belongs to the Nudix hydrolase family. RppH subfamily. A divalent metal cation serves as cofactor.

Accelerates the degradation of transcripts by removing pyrophosphate from the 5'-end of triphosphorylated RNA, leading to a more labile monophosphorylated state that can stimulate subsequent ribonuclease cleavage. The chain is RNA pyrophosphohydrolase from Bradyrhizobium sp. (strain ORS 278).